Reading from the N-terminus, the 433-residue chain is GTPase Obg (433 aa).

An Obg domain is found at 1–159; the sequence is MAFRDVLDIE…RRVRLELRLI (159 aa). The OBG-type G domain maps to 160–327; it reads ADVGLVGYPN…LRQALFDLLP (168 aa). ATP-binding positions include 166 to 173, 191 to 195, 214 to 217, 280 to 283, and 308 to 310; these read GYPNAGKS, FTTLS, DIPG, NKIE, and SAK. Mg(2+) is bound by residues Ser-173 and Thr-193. Positions 342–430 constitute an OCT domain; that stretch reads PEEVREEPLT…IGSFRFEYYA (89 aa).

The protein belongs to the TRAFAC class OBG-HflX-like GTPase superfamily. OBG GTPase family. Monomer. It depends on Mg(2+) as a cofactor.

Its subcellular location is the cytoplasm. Functionally, an essential GTPase which binds GTP, GDP and possibly (p)ppGpp with moderate affinity, with high nucleotide exchange rates and a fairly low GTP hydrolysis rate. Plays a role in control of the cell cycle, stress response, ribosome biogenesis and in those bacteria that undergo differentiation, in morphogenesis control. The sequence is that of GTPase Obg from Deinococcus geothermalis (strain DSM 11300 / CIP 105573 / AG-3a).